The sequence spans 346 residues: Carbamoyl phosphate synthase small chain (346 aa).

Positions 1–160 (MEDGSVFAGR…SVKEPVLLGE (160 aa)) are CPSase. The L-glutamine site is built by serine 39, glycine 209, and glycine 211. The region spanning 164-346 (CIGVVDCGVK…FLKLVERHGH (183 aa)) is the Glutamine amidotransferase type-1 domain. Catalysis depends on cysteine 237, which acts as the Nucleophile. 5 residues coordinate L-glutamine: leucine 238, glutamine 241, asparagine 280, glycine 282, and tyrosine 283. Catalysis depends on residues histidine 320 and glutamate 322.

This sequence belongs to the CarA family. As to quaternary structure, composed of two chains; the small (or glutamine) chain promotes the hydrolysis of glutamine to ammonia, which is used by the large (or ammonia) chain to synthesize carbamoyl phosphate. Tetramer of heterodimers (alpha,beta)4.

It carries out the reaction hydrogencarbonate + L-glutamine + 2 ATP + H2O = carbamoyl phosphate + L-glutamate + 2 ADP + phosphate + 2 H(+). The enzyme catalyses L-glutamine + H2O = L-glutamate + NH4(+). The protein operates within amino-acid biosynthesis; L-arginine biosynthesis; carbamoyl phosphate from bicarbonate: step 1/1. It participates in pyrimidine metabolism; UMP biosynthesis via de novo pathway; (S)-dihydroorotate from bicarbonate: step 1/3. In terms of biological role, small subunit of the glutamine-dependent carbamoyl phosphate synthetase (CPSase). CPSase catalyzes the formation of carbamoyl phosphate from the ammonia moiety of glutamine, carbonate, and phosphate donated by ATP, constituting the first step of 2 biosynthetic pathways, one leading to arginine and/or urea and the other to pyrimidine nucleotides. The small subunit (glutamine amidotransferase) binds and cleaves glutamine to supply the large subunit with the substrate ammonia. In Pyrobaculum aerophilum (strain ATCC 51768 / DSM 7523 / JCM 9630 / CIP 104966 / NBRC 100827 / IM2), this protein is Carbamoyl phosphate synthase small chain.